We begin with the raw amino-acid sequence, 304 residues long: Calcium release-activated calcium channel protein 1 (304 aa).

Pro residues predominate over residues Met-1–His-11. Residues Met-1 to Pro-50 are disordered. Residues Met-1–Lys-89 lie on the Cytoplasmic side of the membrane. Residues Pro-3–Pro-49 form a required for generation of inwardly rectifying CRAC currents region. Residues Ser-12 to Ser-27 show a composition bias toward low complexity. Positions Pro-39 to Ser-61 are AKAP5 association region. Pro residues predominate over residues Gly-41–Pro-50. The interval Ser-72–Ser-92 is interaction with STIM1. The chain crosses the membrane as a helical span at residues Ala-90–Val-107. The Extracellular portion of the chain corresponds to Glu-108–Leu-121. Residues Leu-122–Ile-142 form a helical membrane-spanning segment. The Cytoplasmic segment spans residues Ser-143–Glu-175. Residues Leu-176 to Leu-196 form a helical membrane-spanning segment. The Extracellular segment spans residues Cys-197–Ala-237. Asn-225 carries an N-linked (GlcNAc...) asparagine glycan. The chain crosses the membrane as a helical span at residues Ala-238 to Val-258. The Cytoplasmic portion of the chain corresponds to His-259–Ala-304. The interaction with STIM1 stretch occupies residues Glu-275–His-295. Position 298 is a phosphothreonine (Thr-298).

It belongs to the Orai family. As to quaternary structure, oligomerizes in homomeric and heteromeric ORAI complexes. Native CRAC channels most likely consist of hexameric ORAI heteromers, implying that diverse ORAI1, ORAI2 and ORAI3 subunit combinations with distinct biophysical properties can operate in a cell-type specific way. ARC channels are heteropentamers consisting of three ORAI1 and two ORAI3 subunits. Interacts with STIM1 and STIM2; this regulates channel activity. Interacts with CALM; this may displace STIM1 and STIM2 and might thereby modulate channel activity. Interacts (via N-terminus) with AKAP5 upon store depletion. Interacts with CRACR2A/EFCAB4B; the interaction is direct and takes place in absence of Ca(2+). Forms a complex with CRACR2A/EFCAB4B and STIM1 at low concentration of Ca(2+), the complex dissociates at elevated Ca(2+) concentrations. Interacts with ASPH (isoform 8). Interacts with SLC35G1. Interacts with UBQLN1. Interacts with ADCY8; interaction is calcium store depletion independent; interaction occurs in membrane raft; interaction increases markedly after store depletion; positively regulates SOCE-induced adenylate cyclase activity; contributes to the targeting of ADCY8 to discrete regions of the plasma membrane that are shielded from other calcium events. Interacts with EFHB; the interaction takes place upon Ca(2+)-store depletion. Interacts (via N- and C-termini) with ATP2C2 (via N-terminus); this interaction regulates Ca(2+) influx at the plasma membrane. Interacts with TSPAN18; this interaction regulates ORAI1 exit from the endoplasmic (ER), and/or Golgi, and trafficking to the cell surface. Post-translationally, N-glycosylated. N-glycosylation inhibits channel activity in T cells. In terms of processing, ubiquitinated. Cys-195 is oxidated, leading to inactivation of channel activity. As to expression, expressed in lactating mammary epithelium (at protein level).

Its subcellular location is the cell membrane. It localises to the basolateral cell membrane. The enzyme catalyses Ca(2+)(in) = Ca(2+)(out). Oxidation at Cys-197 leads to inactivation of channel activity. In terms of biological role, pore-forming subunit of two major inward rectifying Ca(2+) channels at the plasma membrane: Ca(2+) release-activated Ca(2+) (CRAC) channels and arachidonate-regulated Ca(2+)-selective (ARC) channels. Assembles with ORAI2 and ORAI3 to form hexameric CRAC channels that mediate Ca(2+) influx upon depletion of endoplasmic reticulum Ca(2+) store and channel activation by Ca(2+) sensor STIM1, a process known as store-operated Ca(2+) entry (SOCE). Various pore subunit combinations may account for distinct CRAC channel spatiotemporal and cell-type specific dynamics. ORAI1 mainly contributes to the generation of Ca(2+) plateaus involved in sustained Ca(2+) entry and is dispensable for cytosolic Ca(2+) oscillations, whereas ORAI2 and ORAI3 generate oscillatory patterns. CRAC channels assemble in Ca(2+) signaling microdomains where Ca(2+) influx is coupled to calmodulin and calcineurin signaling and activation of NFAT transcription factors recruited to ORAI1 via AKAP5. Activates NFATC2/NFAT1 and NFATC3/NFAT4-mediated transcriptional responses. CRAC channels are the main pathway for Ca(2+) influx in T cells and promote the immune response to pathogens by activating NFAT-dependent cytokine and chemokine transcription. Assembles with ORAI3 to form channels that mediate store-independent Ca(2+) influx in response to inflammatory metabolites arachidonate or its derivative leukotriene C4, termed ARC and LRC channels respectively. Plays a prominent role in Ca(2+) influx at the basolateral membrane of mammary epithelial cells independently of the Ca(2+) content of endoplasmic reticulum or Golgi stores. May mediate transepithelial transport of large quantities of Ca(2+) for milk secretion. This chain is Calcium release-activated calcium channel protein 1 (Orai1), found in Mus musculus (Mouse).